We begin with the raw amino-acid sequence, 557 residues long: Dihydroxy-acid dehydratase 1 (557 aa).

Residue Cys50 participates in [2Fe-2S] cluster binding. Asp82 serves as a coordination point for Mg(2+). Cys123 provides a ligand contact to [2Fe-2S] cluster. 2 residues coordinate Mg(2+): Asp124 and Lys125. At Lys125 the chain carries N6-carboxylysine. Cys195 serves as a coordination point for [2Fe-2S] cluster. Mg(2+) is bound at residue Glu447. Catalysis depends on Ser473, which acts as the Proton acceptor.

It belongs to the IlvD/Edd family. As to quaternary structure, homodimer. It depends on [2Fe-2S] cluster as a cofactor. Mg(2+) is required as a cofactor.

It carries out the reaction (2R)-2,3-dihydroxy-3-methylbutanoate = 3-methyl-2-oxobutanoate + H2O. It catalyses the reaction (2R,3R)-2,3-dihydroxy-3-methylpentanoate = (S)-3-methyl-2-oxopentanoate + H2O. The protein operates within amino-acid biosynthesis; L-isoleucine biosynthesis; L-isoleucine from 2-oxobutanoate: step 3/4. It participates in amino-acid biosynthesis; L-valine biosynthesis; L-valine from pyruvate: step 3/4. Its function is as follows. Functions in the biosynthesis of branched-chain amino acids. Catalyzes the dehydration of (2R,3R)-2,3-dihydroxy-3-methylpentanoate (2,3-dihydroxy-3-methylvalerate) into 2-oxo-3-methylpentanoate (2-oxo-3-methylvalerate) and of (2R)-2,3-dihydroxy-3-methylbutanoate (2,3-dihydroxyisovalerate) into 2-oxo-3-methylbutanoate (2-oxoisovalerate), the penultimate precursor to L-isoleucine and L-valine, respectively. The protein is Dihydroxy-acid dehydratase 1 of Cupriavidus pinatubonensis (strain JMP 134 / LMG 1197) (Cupriavidus necator (strain JMP 134)).